We begin with the raw amino-acid sequence, 506 residues long: MEEFQRYFELDRYQQHDFLYPLIFQEYIYALAHDHGLNRSILLENAGYDKKSSLLIVKRLITRMYQQNHLIISANDSNQNPFLGHNKNLYSQMISEGFAVIVEIPFSLRLRSSLEGKEIVKSHNLQSIHSIFPFLEDKFLHLNYVLDILIPYPIHLEILVQTLRHWVKDASSLHLLRFFIHEYRNWNSLITPKRPSAHFSKRNQRLFLFLYNSHVCEYESIFIFLLTQSSHLRSTSSGVLLERIYFYGKLEHSVEVCAKDFKAILWLFKDPFIHYLRYQGKSILTSKGTSLLMNKWKYYLLNCWQCHFYVWSQPRRIYINQLSNHSLDFLGYLSSVRLNPSMVRSQMLENSFLIDNAIKKFDTIVPIIPMIGSLAKAKFCNVLGHPISKPVWADLSDSDIIDRFGRICRNLSHYHSGSSKKKTLYRIKYILRLSCARTLARKHKSTVRAFLKRVGSELLEEFFTEEEQVLSLTFPRAFSTSTSRGLYRRRIWYLDIICINDLANHE.

The protein belongs to the intron maturase 2 family. MatK subfamily.

It localises to the plastid. The protein localises to the chloroplast. Functionally, usually encoded in the trnK tRNA gene intron. Probably assists in splicing its own and other chloroplast group II introns. The protein is Maturase K of Mentzelia lindleyi (Blazing star).